A 69-amino-acid chain; its full sequence is Cell division protein ZapB (69 aa).

The stretch at 6–68 forms a coiled coil; it reads LEQLEARVQS…LGKMDQMNSE (63 aa).

The protein belongs to the ZapB family. As to quaternary structure, homodimer. The ends of the coiled-coil dimer bind to each other, forming polymers. Interacts with FtsZ.

The protein localises to the cytoplasm. Non-essential, abundant cell division factor that is required for proper Z-ring formation. It is recruited early to the divisome by direct interaction with FtsZ, stimulating Z-ring assembly and thereby promoting cell division earlier in the cell cycle. Its recruitment to the Z-ring requires functional FtsA or ZipA. This chain is Cell division protein ZapB, found in Tolumonas auensis (strain DSM 9187 / NBRC 110442 / TA 4).